The following is a 501-amino-acid chain: ATP synthase subunit beta (501 aa).

153-160 is a binding site for ATP; it reads GGAGVGKT.

It belongs to the ATPase alpha/beta chains family. In terms of assembly, F-type ATPases have 2 components, CF(1) - the catalytic core - and CF(0) - the membrane proton channel. CF(1) has five subunits: alpha(3), beta(3), gamma(1), delta(1), epsilon(1). CF(0) has three main subunits: a(1), b(2) and c(9-12). The alpha and beta chains form an alternating ring which encloses part of the gamma chain. CF(1) is attached to CF(0) by a central stalk formed by the gamma and epsilon chains, while a peripheral stalk is formed by the delta and b chains.

Its subcellular location is the cell inner membrane. It catalyses the reaction ATP + H2O + 4 H(+)(in) = ADP + phosphate + 5 H(+)(out). In terms of biological role, produces ATP from ADP in the presence of a proton gradient across the membrane. The catalytic sites are hosted primarily by the beta subunits. The sequence is that of ATP synthase subunit beta from Cytophaga hutchinsonii (strain ATCC 33406 / DSM 1761 / CIP 103989 / NBRC 15051 / NCIMB 9469 / D465).